The chain runs to 411 residues: MLDLKNLQNNFDEVAKKLKNKKVDENILKKLAELFASLKKEKIALEEFQAFQNKFSKELATAEDKESLKAKLSENKSKINEQSAKVNALENELEEIAHAIPNIPDECVPVGEDENENVELKKVLNPPSFDFTPKEHFELGESLNWLDFIRGVKISQSRFCVLKNEGALLSRALVNYMIDFNRSRGFEFVNVPFLVNGATMFGTGQLPKFKEDMYKVDDEDLYLISTSEIPVTNLYSGEILASETLPIKMTCYSACFRKEAGSAGRDTRGIIRQHQFEKVELVSITKTEQSDSVFNEMLECASDLLSSLGLAHRHLMLCTGDLGFSAAKTVDLEVWLPGQNKYREISSVSNCRDFQARRAKIRYKNEQGKNELVHTLNGSSLAVGRTLVAIMENYQDKEGKIHIPDVLKKYF.

An L-serine-binding site is contributed by 226–228 (TSE). Residue 257–259 (RKE) participates in ATP binding. Position 280 (glutamate 280) interacts with L-serine. ATP is bound at residue 344-347 (EISS). Serine 379 provides a ligand contact to L-serine.

The protein belongs to the class-II aminoacyl-tRNA synthetase family. Type-1 seryl-tRNA synthetase subfamily. Homodimer. The tRNA molecule binds across the dimer.

It is found in the cytoplasm. The catalysed reaction is tRNA(Ser) + L-serine + ATP = L-seryl-tRNA(Ser) + AMP + diphosphate + H(+). The enzyme catalyses tRNA(Sec) + L-serine + ATP = L-seryl-tRNA(Sec) + AMP + diphosphate + H(+). It functions in the pathway aminoacyl-tRNA biosynthesis; selenocysteinyl-tRNA(Sec) biosynthesis; L-seryl-tRNA(Sec) from L-serine and tRNA(Sec): step 1/1. Functionally, catalyzes the attachment of serine to tRNA(Ser). Is also able to aminoacylate tRNA(Sec) with serine, to form the misacylated tRNA L-seryl-tRNA(Sec), which will be further converted into selenocysteinyl-tRNA(Sec). This chain is Serine--tRNA ligase, found in Campylobacter jejuni (strain RM1221).